Reading from the N-terminus, the 281-residue chain is Ribose-phosphate pyrophosphokinase (281 aa).

ATP-binding positions include 33–35 (DGE) and 90–91 (RQ). The Mg(2+) site is built by histidine 123 and aspartate 161. Lysine 185 is a catalytic residue. Residues arginine 187 and aspartate 211 each coordinate D-ribose 5-phosphate.

This sequence belongs to the ribose-phosphate pyrophosphokinase family. Class III (archaeal) subfamily. Mg(2+) serves as cofactor.

The protein resides in the cytoplasm. The catalysed reaction is D-ribose 5-phosphate + ATP = 5-phospho-alpha-D-ribose 1-diphosphate + AMP + H(+). The protein operates within metabolic intermediate biosynthesis; 5-phospho-alpha-D-ribose 1-diphosphate biosynthesis; 5-phospho-alpha-D-ribose 1-diphosphate from D-ribose 5-phosphate (route I): step 1/1. Involved in the biosynthesis of the central metabolite phospho-alpha-D-ribosyl-1-pyrophosphate (PRPP) via the transfer of pyrophosphoryl group from ATP to 1-hydroxyl of ribose-5-phosphate (Rib-5-P). In Halobacterium salinarum (strain ATCC 29341 / DSM 671 / R1), this protein is Ribose-phosphate pyrophosphokinase.